We begin with the raw amino-acid sequence, 388 residues long: MNMAPTLATACASLPPEGALAPRGGPSALMTHGTALIMAGGTGGHIFPGLALAHALRERGWRVHWLGGAGTASQPSMESQLVPPQGFAFESIDFSGVRGKGLGTLVRLPWRLLRACWQSVALLRRVQPDVVLGLGGYITLPAGLMSVLLGKALILHEQNSVAGMANKVLARFATRVFTAFPDVLPNGHWVGNPLRAAFLQVPDPATRFAGRAGPLKLLVLGGSLGARALNDIVPRALALLPPQARPIVTHQSGARQIDALRANYAGAGVQAELTPFIDDTAQAMAGADLVLCRAGASTVTEIAAVGAAALFVPFPSAVDDHQTSNARFLVDQGAGWLKPQSELSPEWLADMLQKTERIELMGRGLEAKKLQKLDATHKIVAACEEVVR.

UDP-N-acetyl-alpha-D-glucosamine-binding positions include 42-44 (TGG), N159, R195, S223, I277, and Q322.

This sequence belongs to the glycosyltransferase 28 family. MurG subfamily.

The protein localises to the cell inner membrane. It catalyses the reaction di-trans,octa-cis-undecaprenyl diphospho-N-acetyl-alpha-D-muramoyl-L-alanyl-D-glutamyl-meso-2,6-diaminopimeloyl-D-alanyl-D-alanine + UDP-N-acetyl-alpha-D-glucosamine = di-trans,octa-cis-undecaprenyl diphospho-[N-acetyl-alpha-D-glucosaminyl-(1-&gt;4)]-N-acetyl-alpha-D-muramoyl-L-alanyl-D-glutamyl-meso-2,6-diaminopimeloyl-D-alanyl-D-alanine + UDP + H(+). The protein operates within cell wall biogenesis; peptidoglycan biosynthesis. In terms of biological role, cell wall formation. Catalyzes the transfer of a GlcNAc subunit on undecaprenyl-pyrophosphoryl-MurNAc-pentapeptide (lipid intermediate I) to form undecaprenyl-pyrophosphoryl-MurNAc-(pentapeptide)GlcNAc (lipid intermediate II). This chain is UDP-N-acetylglucosamine--N-acetylmuramyl-(pentapeptide) pyrophosphoryl-undecaprenol N-acetylglucosamine transferase, found in Albidiferax ferrireducens (strain ATCC BAA-621 / DSM 15236 / T118) (Rhodoferax ferrireducens).